Here is a 400-residue protein sequence, read N- to C-terminus: NADH dehydrogenase-like protein MT1860 (400 aa).

The protein belongs to the NADH dehydrogenase family. The cofactor is FAD.

In Mycobacterium tuberculosis (strain CDC 1551 / Oshkosh), this protein is NADH dehydrogenase-like protein MT1860.